Here is a 148-residue protein sequence, read N- to C-terminus: Leghemoglobin 29 (148 aa).

Residues 2 to 148 (EFTLRQEALV…LAVAIMKEMS (147 aa)) enclose the Globin domain. Nitrated tyrosine is present on Y30. S45 lines the heme b pocket. At S45 the chain carries Phosphoserine. O2 is bound at residue H63. Residues H95 and K98 each contribute to the heme b site. Y136 is subject to Nitrated tyrosine.

The protein belongs to the plant globin family. As to quaternary structure, monomer. Post-translationally, nitrated in effective nodules and particularly in hypoxic conditions; this mechanism may play a protective role in the symbiosis by buffering toxic peroxynitrite NO(2)(-). Nitration level decrease during nodule senescence. Phosphorylation at Ser-45 disrupts the molecular environment of its porphyrin ring oxygen binding pocket, thus leading to a reduced oxygen consumption and to the delivery of oxygen O(2) to symbiosomes. As to expression, accumulates in root nodules after inoculation by bacteria of the genus Rhizobium. Expressed in mycorrhizal roots in the presence of the mycorrhizal fungus Glomus fasciculatum.

It is found in the cytoplasm. It localises to the cytosol. The protein localises to the nucleus. In terms of biological role, leghemoglobin that reversibly binds oxygen O(2) through a pentacoordinated heme iron. In root nodules, facilitates the diffusion of oxygen to the bacteroids while preventing the bacterial nitrogenase from being inactivated by buffering dioxygen, nitric oxide and carbon monoxide, and promoting the formation of reactive oxygen species (ROS, e.g. H(2)O(2)). This role is essential for symbiotic nitrogen fixation (SNF). This Vicia faba (Broad bean) protein is Leghemoglobin 29.